The chain runs to 107 residues: UPF0060 membrane protein RPB_2370 (107 aa).

Transmembrane regions (helical) follow at residues 5 to 25 (IIYVGAAIAEIAGCFAFWGWL), 31 to 51 (VWWLAPGLLSLALFAYLLTLV), 61 to 81 (AAYGGIYIVASLAWLWSVEGV), and 85 to 105 (RWDVSGACVCLAGAAIILWGP).

It belongs to the UPF0060 family.

Its subcellular location is the cell inner membrane. This is UPF0060 membrane protein RPB_2370 from Rhodopseudomonas palustris (strain HaA2).